We begin with the raw amino-acid sequence, 487 residues long: Probable cytochrome P450 516A1 (487 aa).

Residues 1 to 21 (MIILLLSIIIFILYIVKIFKN) form a helical membrane-spanning segment. C434 contacts heme.

It belongs to the cytochrome P450 family. It depends on heme as a cofactor.

It localises to the membrane. The protein is Probable cytochrome P450 516A1 (cyp516A1) of Dictyostelium discoideum (Social amoeba).